Here is a 508-residue protein sequence, read N- to C-terminus: Photosystem II CP47 reaction center protein (508 aa).

6 helical membrane passes run 21–36 (AVHI…WAGS), 101–115 (IVFS…IWHW), 140–156 (GIHL…FGAF), 203–218 (IAAG…FHLS), 237–252 (VLSS…AFVV), and 457–472 (TFAL…HGAR).

Belongs to the PsbB/PsbC family. PsbB subfamily. In terms of assembly, PSII is composed of 1 copy each of membrane proteins PsbA, PsbB, PsbC, PsbD, PsbE, PsbF, PsbH, PsbI, PsbJ, PsbK, PsbL, PsbM, PsbT, PsbX, PsbY, PsbZ, Psb30/Ycf12, at least 3 peripheral proteins of the oxygen-evolving complex and a large number of cofactors. It forms dimeric complexes. Binds multiple chlorophylls. PSII binds additional chlorophylls, carotenoids and specific lipids. is required as a cofactor.

Its subcellular location is the plastid. It is found in the chloroplast thylakoid membrane. In terms of biological role, one of the components of the core complex of photosystem II (PSII). It binds chlorophyll and helps catalyze the primary light-induced photochemical processes of PSII. PSII is a light-driven water:plastoquinone oxidoreductase, using light energy to abstract electrons from H(2)O, generating O(2) and a proton gradient subsequently used for ATP formation. This is Photosystem II CP47 reaction center protein from Secale cereale (Rye).